The following is a 213-amino-acid chain: Oxidase ustYa (213 aa).

The interval 1 to 26 (MAERSSNGYKEVPVRQSEESTIAEEE) is disordered. A helical transmembrane segment spans residues 48–68 (AVWFLIALLLLSNIGLLGGLI). N-linked (GlcNAc...) asparagine glycosylation occurs at Asn98. Short sequence motifs (HXXHC) lie at residues 123–127 (HQLHC) and 150–154 (HLMHC).

Belongs to the ustYa family.

The protein resides in the membrane. Its pathway is mycotoxin biosynthesis. Functionally, oxidase; part of the gene cluster that mediates the biosynthesis of the secondary metabolite ustiloxin B, an antimitotic tetrapeptide. First, ustA is processed by the subtilisin-like endoprotease Kex2 that is outside the ustiloxin B gene cluster, at the C-terminal side of Arg-Lys, after transfer to Golgi apparatus through the endoplasmic reticulum (ER). Cleavage by KEX2 generates 16 peptides YAIG-I to YAIG-XVI. To process the precursor peptide further, at least two peptidases are necessary to cleave the N-terminal and C-terminal sides of the Tyr-Ala-Ile-Gly core peptide which serves as backbone for the synthesis of ustiloxin B, through cyclization and modification of the tyrosine with a non-protein coding amino acid, norvaline. One of the two peptidases must be the serine peptidase ustP; and the other pepdidase is probably ustH. Macrocyclization of the core peptide derived from ustA requires the tyrosinase ustQ, as well as the homologous oxidases ustYa and ustYb, and leads to the production of the first cyclization product N-desmethylustiloxin F. For the formation of N-desmethylustiloxin F, three oxidation steps are required, hydroxylation at the benzylic position, hydroxylation at either the aromatic ring of Tyr or beta-position of Ile, and oxidative cyclization. UstQ may catalyze the oxidation of a phenol moiety, whereas the ustYa and ustYb are most likely responsible for the remaining two-step oxidations. N-desmethylustiloxin F is then methylated by ustM to yield ustiloxin F which in turn substrate of the cytochrome P450 monooxygenase ustC which catalyzes the formation of S-deoxyustiloxin H. The flavoprotein monooxygenases ustF1 and ustF2 then participate in the modification of the side chain of S-deoxyustiloxin H, leading to the synthesis of an oxime intermediate, via ustiloxin H. Finally, carboxylative dehydration performed by the cysteine desulfurase-like protein ustD yields ustiloxin B. This Aspergillus flavus (strain ATCC 200026 / FGSC A1120 / IAM 13836 / NRRL 3357 / JCM 12722 / SRRC 167) protein is Oxidase ustYa.